Here is a 143-residue protein sequence, read N- to C-terminus: Large-conductance mechanosensitive channel (143 aa).

Helical transmembrane passes span 10–30 (FAVK…GAFS) and 89–109 (GSFI…FLMV).

It belongs to the MscL family. Homopentamer.

Its subcellular location is the cell inner membrane. Its function is as follows. Channel that opens in response to stretch forces in the membrane lipid bilayer. May participate in the regulation of osmotic pressure changes within the cell. This Burkholderia ambifaria (strain ATCC BAA-244 / DSM 16087 / CCUG 44356 / LMG 19182 / AMMD) (Burkholderia cepacia (strain AMMD)) protein is Large-conductance mechanosensitive channel.